Consider the following 40-residue polypeptide: Alpha-conotoxin-like Qc1.1c (40 aa).

A propeptide spanning residues 1–19 is cleaved from the precursor; sequence SDGRNTAANDKASNLMALR. Intrachain disulfides connect Cys22/Cys28 and Cys23/Cys36. The tract at residues 24–26 is lacks the Ser-Xaa-Pro motif that is crucial for potent interaction with nAChR; it reads PNP.

The protein belongs to the conotoxin A superfamily. As to expression, expressed by the venom duct.

The protein localises to the secreted. Its function is as follows. Alpha-conotoxins act on postsynaptic membranes, they bind to the nicotinic acetylcholine receptors (nAChR) and thus inhibit them. Has possibly a distinct nAChR binding mode from other alpha-conotoxins, due to a different three residue motif (lacks the Ser-Xaa-Pro motif). The protein is Alpha-conotoxin-like Qc1.1c of Conus quercinus (Oak cone).